Here is a 375-residue protein sequence, read N- to C-terminus: tRNA(Met) cytidine acetate ligase (375 aa).

Residues Val-7 to His-20, Gly-101, Asn-151, and Arg-176 each bind ATP.

Belongs to the TmcAL family.

It is found in the cytoplasm. The enzyme catalyses cytidine(34) in elongator tRNA(Met) + acetate + ATP = N(4)-acetylcytidine(34) in elongator tRNA(Met) + AMP + diphosphate. Catalyzes the formation of N(4)-acetylcytidine (ac(4)C) at the wobble position of elongator tRNA(Met), using acetate and ATP as substrates. First activates an acetate ion to form acetyladenylate (Ac-AMP) and then transfers the acetyl group to tRNA to form ac(4)C34. The polypeptide is tRNA(Met) cytidine acetate ligase (Limosilactobacillus fermentum (strain NBRC 3956 / LMG 18251) (Lactobacillus fermentum)).